The primary structure comprises 734 residues: Tripartite terminase subunit 3 (734 aa).

The Nuclear localization signal motif lies at P183–V189. Positions V258 to T265 match the Walker A motif motif. Positions L352–E357 match the Walker B motif motif. Residue E357 is the For ATPase activity of the active site. Residues D509, E581, and D706 each act as for nuclease activity in the active site.

It belongs to the herpesviridae TRM3 protein family. As to quaternary structure, interacts with the terminase subunits TRM1 and TRM2. Interacts with portal protein.

Its subcellular location is the host nucleus. Component of the molecular motor that translocates viral genomic DNA in empty capsid during DNA packaging. Forms a tripartite terminase complex together with TRM1 and TRM2 in the host cytoplasm. Once the complex reaches the host nucleus, it interacts with the capsid portal vertex. This portal forms a ring in which genomic DNA is translocated into the capsid. TRM3 carries an RNase H-like nuclease activity that plays an important role for the cleavage of concatemeric viral DNA into unit length genomes. The polypeptide is Tripartite terminase subunit 3 (Human herpesvirus 2 (strain HG52) (HHV-2)).